Consider the following 1368-residue polypeptide: DNA-directed RNA polymerase subunit beta (1368 aa).

This sequence belongs to the RNA polymerase beta chain family. The RNAP catalytic core consists of 2 alpha, 1 beta, 1 beta' and 1 omega subunit. When a sigma factor is associated with the core the holoenzyme is formed, which can initiate transcription.

It carries out the reaction RNA(n) + a ribonucleoside 5'-triphosphate = RNA(n+1) + diphosphate. Its function is as follows. DNA-dependent RNA polymerase catalyzes the transcription of DNA into RNA using the four ribonucleoside triphosphates as substrates. This Burkholderia ambifaria (strain ATCC BAA-244 / DSM 16087 / CCUG 44356 / LMG 19182 / AMMD) (Burkholderia cepacia (strain AMMD)) protein is DNA-directed RNA polymerase subunit beta.